The chain runs to 468 residues: Fibrinogen beta chain (468 aa).

Pyrrolidone carboxylic acid is present on Gln1. Residues 1–10 (QFPTDYDEGQ) show a composition bias toward acidic residues. A disordered region spans residues 1–54 (QFPTDYDEGQDDRPKVGLGARGHRPYDKKKEEAPSLRPVPPPISGGGYRARPAT). A glycan (O-linked (GalNAc...) threonine) is linked at Thr4. Tyr6 bears the Sulfotyrosine mark. Residues 24–34 (RPYDKKKEEAP) are compositionally biased toward basic and acidic residues. Residues 88 to 204 (KLQDTLVRQE…TQMEYCRTPC (117 aa)) adopt a coiled-coil conformation. 2 cysteine pairs are disulfide-bonded: Cys208/Cys293 and Cys218/Cys247. Residues 209–465 (NIPVVSGKEC…KMSMKIRPYF (257 aa)) form the Fibrinogen C-terminal domain. An N-linked (GlcNAc...) asparagine glycan is attached at Asn371. Cys401 and Cys414 are oxidised to a cystine.

As to quaternary structure, heterohexamer; disulfide linked. Contains 2 sets of 3 non-identical chains (alpha, beta and gamma). The 2 heterotrimers are in head to head conformation with the N-termini in a small central domain. Conversion of fibrinogen to fibrin is triggered by thrombin, which cleaves fibrinopeptides A and B from alpha and beta chains, and thus exposes the N-terminal polymerization sites responsible for the formation of the soft clot. The soft clot is converted into the hard clot by factor XIIIA which catalyzes the epsilon-(gamma-glutamyl)lysine cross-linking between gamma chains (stronger) and between alpha chains (weaker) of different monomers. Detected in blood plasma (at protein level).

It is found in the secreted. In terms of biological role, cleaved by the protease thrombin to yield monomers which, together with fibrinogen alpha (FGA) and fibrinogen gamma (FGG), polymerize to form an insoluble fibrin matrix. Fibrin has a major function in hemostasis as one of the primary components of blood clots. In addition, functions during the early stages of wound repair to stabilize the lesion and guide cell migration during re-epithelialization. Was originally thought to be essential for platelet aggregation, based on in vitro studies using anticoagulated blood. However subsequent studies have shown that it is not absolutely required for thrombus formation in vivo. Enhances expression of SELP in activated platelets. Maternal fibrinogen is essential for successful pregnancy. Fibrin deposition is also associated with infection, where it protects against IFNG-mediated hemorrhage. May also facilitate the antibacterial immune response via both innate and T-cell mediated pathways. This Bos taurus (Bovine) protein is Fibrinogen beta chain (FGB).